The sequence spans 72 residues: Bowman-Birk type proteinase inhibitor 2a (72 aa).

Cystine bridges form between Cys-8–Cys-61, Cys-9–Cys-24, Cys-12–Cys-57, Cys-14–Cys-22, Cys-31–Cys-38, Cys-35–Cys-50, and Cys-40–Cys-48.

Dimer.

Its function is as follows. Inhibits trypsin (IC(50)=0.9 nM) and alpha-chymotrypsin (IC(50)=1.1 nM). This is Bowman-Birk type proteinase inhibitor 2a from Lathyrus sativus (White vetchling).